A 127-amino-acid polypeptide reads, in one-letter code: Urotensin-2 (127 aa).

The N-terminal stretch at 1–16 (MSKLFFCCLILAGSFC) is a signal peptide. A propeptide spanning residues 17–111 (SFRSLPIIVP…RLQSKDRKQF (95 aa)) is cleaved from the precursor. Cysteines 121 and 126 form a disulfide.

It belongs to the urotensin-2 family. In terms of tissue distribution, central nervous system. Spinal cord.

The protein resides in the secreted. Its function is as follows. Involved in smooth muscle stimulating and ion mobilizing activities. It has a suggested role as a corticotropin-releasing factor. The protein is Urotensin-2 (UTS2) of Pelophylax ridibundus (Marsh frog).